We begin with the raw amino-acid sequence, 679 residues long: DNA ligase (679 aa).

NAD(+)-binding positions include 36 to 40, 85 to 86, and Glu-116; these read DAQYD and SL. Lys-118 functions as the N6-AMP-lysine intermediate in the catalytic mechanism. Arg-139, Glu-174, Lys-300, and Lys-324 together coordinate NAD(+). Zn(2+) contacts are provided by Cys-418, Cys-421, Cys-436, and Cys-441. In terms of domain architecture, BRCT spans 600–679; sequence EGGGPLNGKV…NEFRELTGRK (80 aa).

Belongs to the NAD-dependent DNA ligase family. LigA subfamily. The cofactor is Mg(2+). It depends on Mn(2+) as a cofactor.

The catalysed reaction is NAD(+) + (deoxyribonucleotide)n-3'-hydroxyl + 5'-phospho-(deoxyribonucleotide)m = (deoxyribonucleotide)n+m + AMP + beta-nicotinamide D-nucleotide.. DNA ligase that catalyzes the formation of phosphodiester linkages between 5'-phosphoryl and 3'-hydroxyl groups in double-stranded DNA using NAD as a coenzyme and as the energy source for the reaction. It is essential for DNA replication and repair of damaged DNA. This Pelotomaculum thermopropionicum (strain DSM 13744 / JCM 10971 / SI) protein is DNA ligase.